The following is a 119-amino-acid chain: Large ribosomal subunit protein bL20 (119 aa).

The protein belongs to the bacterial ribosomal protein bL20 family. In terms of assembly, part of the 50S ribosomal subunit.

Binds directly to 23S ribosomal RNA and is necessary for the in vitro assembly process of the 50S ribosomal subunit. It is not involved in the protein synthesizing functions of that subunit. The polypeptide is Large ribosomal subunit protein bL20 (rplT) (Bacillus subtilis (strain 168)).